The primary structure comprises 1673 residues: MAQQQQQQMQQQQQHHTSSINNNNSSSIVLLQQQQPQQQQQQLDQLQQYNNNLYSQNYNMEEYERRKRREREKIERQQGIQIDDRETSLFGEPRRLTEGDAEITAALGEFFEAREYINNQTVGISRSAPGAGNPRLQPNLAPQAKSLGHSPSSASSAAGPTAASATTSLPGQQQHYQQQQRPPTYVKQADNKPPYNGRGGYPGQPMKNDIPSSSGMAPPRGPPRTSSSNSNSSSVTNNASSGGVPASTPLGPPLSTQMPNGREKSFLGPPAPALHNGTGGRFVPPAASKRPGVGQQPPPPEKDVNKIISDIANIFTVQPLTLIAATPHAPTRENYNLLAPNRQKYAMDIPSSPPSAEPSSLMTPLFAPITSPIAPLVTTPPQASQMPLGGATSGTILAGEALAPLHQLPPTMPKAASGVTSPGPVKPLKTEKNHSLEKQDSCLENDLELSESEDEQRKKEGRSGGNSSNSSESDSSESGSESSSKNDLQHHPNHQQHHHQLQQQQQQQQATMQQQQVLQQQHRSQPLTSNGAQNKKFRHEIIARGSNTITGLLSSSGFGSGGNVGPAGVNSNAVVGTGSGSGGTLSSGGSSSNKTPSPTESNKWNLSRFFHKPANQTNSESVSPGNVSMKVPGILPGGAQIIPESIDVTTAIVKNEKNDMAMEEGEEEDDDEEQQLRYGGGLSVTPVAVKKEAIDAVSEMALGAIPKTQIKRESAETLLSARLSDSGTSASGSSSSSSSSSDSAMGGEVVPMPGPGETLQLPGVPAAITTVMRVQPTQSQKAPPSNSVTLTPILPLPTSPKQRQKKPRKKKAITSAPILDSSDDDEPPPKHPGLDHTAVSVQTQPATDTVKKGRGRPRKQQQSGGSGNLSSASAGSSSQTKGPTLTAAKKPLAKTPLAMSRARKREHSSQSSSNGNTPTKKVATPQLVAAPLKPTSNTAGSSSSDEDSSSSAESSSKSSSSSSSSDDTETQNTNCRIVKLNKTGAVQKKALLGSGSSSPSSSGSEAEDQTTRSQVGSGQALAQQLPPYKQLPISQHSQHLSSSDCSSSSGGCTAVCSSSSGEEDEGRREKERERKPKSDKNKINTLTRIFNPKEGGAKKQGQVVIVDLQEEQQQGKLDAAAQPSAPQAPPAAPAAIMAKPRMTPTQQQQLGAGLASPARTTTPHLTSLICKIDLSKLSRERIMRLKKLTPAQQNGHLTPKDQATNAVHVPNGYAGDTNPAAKVKHEHPVKPEPELDAGYEAKFKPGNVKQEFQLKQERDRDRERERERERERERDREREQPPGRRRKRSSSSSSSPYKEKKRKKEKADQLQMGKELLPVPVLLPSNNHERMPNHDRLSYDKLQLLHEDAAAVIGDVSAPNGSPTKKLLAMSPLPPPPTVTVAPATCNEAVQTTPPSATATSAIAPPVPATRLIYRSYFDRDVEHPSDDPRKNNQFLQEAINRKHAADLERDSFNQVTLYLEAVVYFLLTADAMERCSSEQATNTMYKDTLSLIKFISTKFRPYQQQSTTNIQHETHNKVAILSLRCQSLISLKLYKLRRKDCRAIINSLTDFFRVGRGDIANGNTPSSISPSNSVGSQGSGSNTPPGRIVPPDIHNMLCKQNEFLSYLNSAHELWDQADRLVRTGNHIDFIRELDHENGPLTLHSTMHEVFRYVQAGLKTLRDAVSHPTHQSQ.

Disordered stretches follow at residues 1–24 (MAQQ…NNNN), 54–80 (YSQN…QQGI), 125–302 (SRSA…PPEK), 407–534 (QLPP…GAQN), 575–604 (VGTG…SNKW), 722–1086 (RLSD…INTL), 1114–1133 (QGKL…PAAP), 1141–1160 (RMTP…PART), and 1187–1315 (KLTP…MGKE). Basic and acidic residues predominate over residues 71–80 (REKIERQQGI). 2 stretches are compositionally biased toward low complexity: residues 146-180 (SLGH…QQQQ) and 223-244 (PRTS…SGGV). The residue at position 420 (Thr420) is a Phosphothreonine. Positions 428 to 441 (LKTEKNHSLEKQDS) are enriched in basic and acidic residues. The segment covering 443 to 454 (LENDLELSESED) has biased composition (acidic residues). Phosphoserine is present on residues Ser450 and Ser452. Residues 465-486 (GNSSNSSESDSSESGSESSSKN) show a composition bias toward low complexity. Basic residues predominate over residues 491–500 (HPNHQQHHHQ). Low complexity predominate over residues 501–525 (LQQQQQQQQATMQQQQVLQQQHRSQ). Gly residues predominate over residues 577–586 (TGSGSGGTLS). Positions 594 to 604 (KTPSPTESNKW) are enriched in polar residues. The segment covering 724 to 757 (SDSGTSASGSSSSSSSSSDSAMGGEVVPMPGPGE) has biased composition (low complexity). The segment covering 775–788 (QPTQSQKAPPSNSV) has biased composition (polar residues). Residues 802–812 (QRQKKPRKKKA) are compositionally biased toward basic residues. Residues Ser821 and Ser822 each carry the phosphoserine modification. The segment at residues 851–863 (KKGRGRPRKQQQS) is a DNA-binding region (a.T hook). Over residues 860 to 898 (QQQSGGSGNLSSASAGSSSQTKGPTLTAAKKPLAKTPLA) the composition is skewed to low complexity. Ser871 and Ser873 each carry phosphoserine. Residues 909 to 919 (SQSSSNGNTPT) show a composition bias toward polar residues. Low complexity-rich tracts occupy residues 949 to 965 (SSSA…SSSS) and 993 to 1004 (GSGSSSPSSSGS). Polar residues predominate over residues 1011–1022 (TRSQVGSGQALA). Positions 1034–1060 (SQHSQHLSSSDCSSSSGGCTAVCSSSS) are enriched in low complexity. Residues 1065 to 1082 (EGRREKERERKPKSDKNK) are compositionally biased toward basic and acidic residues. A compositionally biased stretch (polar residues) spans 1190-1205 (PAQQNGHLTPKDQATN). 2 stretches are compositionally biased toward basic and acidic residues: residues 1226-1243 (EHPV…EAKF) and 1252-1282 (FQLK…EQPP). Phosphoserine is present on Ser1362. Thr1364 is subject to Phosphothreonine. Residues 1564 to 1583 (NTPSSISPSNSVGSQGSGSN) are compositionally biased toward low complexity. A disordered region spans residues 1564-1588 (NTPSSISPSNSVGSQGSGSNTPPGR).

This sequence belongs to the AF4 family. In terms of assembly, component of the super elongation complex (SEC), at least composed of Ell, Cdk9, cyclin-T (CycT), lilli and ear.

It localises to the nucleus. Its function is as follows. Has a role in transcriptional regulation. Acts in parallel with the Ras/MAPK and the PI3K/PKB pathways in the control of cell identity and cellular growth. Essential for regulation of the cytoskeleton and cell growth but not for cell proliferation or growth rate. Required specifically for the microtubule-based basal transport of lipid droplets. Plays a partially redundant function downstream of Raf in cell fate specification in the developing eye. Pair-rule protein that regulates embryonic cellularization, gastrulation and segmentation. The protein is AF4/FMR2 family member lilli of Drosophila melanogaster (Fruit fly).